A 253-amino-acid polypeptide reads, in one-letter code: MLIEDTIFYRPDWKWHNFLKYLVNNLSKYNCLEKKIPSEYSYKDSTYGSKKSKKNVNLSTWGVTHKKRIQFARAVCINSPNYSVLNFLIIPNTIYNVPFFGVDFVSLPNSHLLVLDFQPSLKIQNQYNNELLEKLIKLKNHCHSSLPLAEKMSADVARFFSPGVIWSKLPKEERSDFLIANQLYTSFKEYLDLYLEILFESQQVNLNLQKELINGQNNYLKYRIDNDPARPMLSSLFGKEFTESLIKEVLFTT.

The protein belongs to the HY2 family.

It catalyses the reaction (3Z)-phycoerythrobilin + oxidized 2[4Fe-4S]-[ferredoxin] = 15,16-dihydrobiliverdin + reduced 2[4Fe-4S]-[ferredoxin] + 2 H(+). Functionally, catalyzes the two-electron reduction of the C2 and C3(1) diene system of 15,16-dihydrobiliverdin. The polypeptide is Phycoerythrobilin:ferredoxin oxidoreductase (Prochlorococcus marinus (strain MIT 9312)).